A 137-amino-acid polypeptide reads, in one-letter code: Large ribosomal subunit protein uL16 (137 aa).

This sequence belongs to the universal ribosomal protein uL16 family. Part of the 50S ribosomal subunit.

Functionally, binds 23S rRNA and is also seen to make contacts with the A and possibly P site tRNAs. This is Large ribosomal subunit protein uL16 from Streptococcus suis (strain 98HAH33).